Reading from the N-terminus, the 215-residue chain is Pyrrolidone-carboxylate peptidase (215 aa).

Active-site residues include Glu80, Cys143, and His167.

Belongs to the peptidase C15 family. Homotetramer.

It is found in the cytoplasm. It carries out the reaction Release of an N-terminal pyroglutamyl group from a polypeptide, the second amino acid generally not being Pro.. Functionally, removes 5-oxoproline from various penultimate amino acid residues except L-proline. The polypeptide is Pyrrolidone-carboxylate peptidase (Pectobacterium atrosepticum (strain SCRI 1043 / ATCC BAA-672) (Erwinia carotovora subsp. atroseptica)).